Reading from the N-terminus, the 60-residue chain is Metallothionein B (60 aa).

Positions 1 to 28 are beta; sequence MDPCDCSKSGTCNCGGSCTCTNCSCTSC. Positions 4, 6, 12, 14, 18, 20, 23, 25, 28, 32, 33, 35, 36, 40, 43, 47, 49, 54, 58, and 59 each coordinate a divalent metal cation. The interval 29–60 is alpha; sequence KKSCCPCCPSGCTKCASGCVCKGKTCDTSCCQ.

Belongs to the metallothionein superfamily. Type 1 family.

Metallothioneins have a high content of cysteine residues that bind various heavy metals. The polypeptide is Metallothionein B (mtb) (Chionodraco hamatus (Antarctic teleost icefish)).